A 430-amino-acid polypeptide reads, in one-letter code: MTRSEALFEQAKKTIPGGVNSPVRAFNGVGGSPLFIEKANGAYIYDADGKAYIDYVGSWGPMILGHNHPKIRAAVLAAVENGLSFGAPTELEVQMAEKVISMVPSIEQVRMVSSGTEATMSAIRLARGFTNRDKILKFEGCYHGHADCLLVKAGSGALTLGQPSSPGIPEDFAKHTLTAVYNDLDSVRTLFEQYPTDISCIIIEPVAGNMNCIPPIPGFLQGLRDICDEFGALMIIDEVMTGFRVSQSGAQGYYGVTPDLTTLGKVIGGGMPVGAFGGRKDVMQFIAPTGPVYQAGTLSGNPIAMSAGLAQMEALCEEGLYEELSAKTKRIAEGFKAAADKHGIPMAINYVGGMFGFFFTEQPEITRFDQVTQCNIEQFRIFYHGMLDEGVYLAPSAYEAGFLSMAHGEEEMRLTLEAADRVLASMKAAS.

An N6-(pyridoxal phosphate)lysine modification is found at Lys265.

It belongs to the class-III pyridoxal-phosphate-dependent aminotransferase family. HemL subfamily. Homodimer. Pyridoxal 5'-phosphate serves as cofactor.

It localises to the cytoplasm. The catalysed reaction is (S)-4-amino-5-oxopentanoate = 5-aminolevulinate. It participates in porphyrin-containing compound metabolism; protoporphyrin-IX biosynthesis; 5-aminolevulinate from L-glutamyl-tRNA(Glu): step 2/2. The protein is Glutamate-1-semialdehyde 2,1-aminomutase of Shewanella baltica (strain OS223).